The chain runs to 350 residues: UDP-3-O-acylglucosamine N-acyltransferase (350 aa).

H248 functions as the Proton acceptor in the catalytic mechanism.

It belongs to the transferase hexapeptide repeat family. LpxD subfamily. Homotrimer.

It carries out the reaction a UDP-3-O-[(3R)-3-hydroxyacyl]-alpha-D-glucosamine + a (3R)-hydroxyacyl-[ACP] = a UDP-2-N,3-O-bis[(3R)-3-hydroxyacyl]-alpha-D-glucosamine + holo-[ACP] + H(+). Its pathway is bacterial outer membrane biogenesis; LPS lipid A biosynthesis. In terms of biological role, catalyzes the N-acylation of UDP-3-O-acylglucosamine using 3-hydroxyacyl-ACP as the acyl donor. Is involved in the biosynthesis of lipid A, a phosphorylated glycolipid that anchors the lipopolysaccharide to the outer membrane of the cell. This Nostoc punctiforme (strain ATCC 29133 / PCC 73102) protein is UDP-3-O-acylglucosamine N-acyltransferase.